The following is a 470-amino-acid chain: Ubiquitin carboxyl-terminal hydrolase calypso (470 aa).

A UCH catalytic domain is found at 11–241 (GWLELESDPG…ITHKLKMLRT (231 aa)). C98 serves as the catalytic Nucleophile. H177 serves as the catalytic Proton donor. The stretch at 260–280 (ESRSQAEIRETVDKIKKEEQE) forms a coiled coil. A ULD domain is found at 392 to 420 (NYDEFICTFLSMLAYQGELGDLVTQHLVT). The interval 422–470 (RKPSLGGVQNSGSRGVVRNYNKKSTTNGSSPKTPSSKRRRGRTKYRKRK) is positively charged C-terminal tail required for binding nucleosomes. Over residues 423–434 (KPSLGGVQNSGS) the composition is skewed to polar residues. The segment at 423 to 470 (KPSLGGVQNSGSRGVVRNYNKKSTTNGSSPKTPSSKRRRGRTKYRKRK) is disordered. Residues 456–470 (SSKRRRGRTKYRKRK) are compositionally biased toward basic residues.

This sequence belongs to the peptidase C12 family. BAP1 subfamily. Catalytic component of the polycomb repressive deubiquitinase (PR-DUB) complex, at least composed of caly/calypso, Asx and sba (MBD5/6 homolog). The PR-DUB complex associates with nucleosomes to mediate deubiquitination of histone H2AK118ub1 substrates; the association requires the positively charged C-terminal tail of caly, probably due to direct binding of DNA. Interacts (via ULD domain) with Asx (via DEUBAD domain); the interaction produces a stable heterodimer with a composite binding site for ubiquitin. Homodimerizes (via coiled-coil hinge-region between the UCH and ULD domains) to mediate assembly of 2 copies of the caly-Asx heterodimer into a bisymmetric tetramer; dimerization enhances PR-DUB association with nucleosomes.

Its subcellular location is the nucleus. The catalysed reaction is Thiol-dependent hydrolysis of ester, thioester, amide, peptide and isopeptide bonds formed by the C-terminal Gly of ubiquitin (a 76-residue protein attached to proteins as an intracellular targeting signal).. In terms of biological role, catalytic component of the polycomb repressive deubiquitinase (PR-DUB) complex, a complex that specifically mediates deubiquitination of histone H2A monoubiquitinated at 'Lys-119' (H2AK118ub1). Mediates bisymmetric organization of the PR-DUB complex and is involved in association with nucleosomes to mediate deubiquitination. Does not deubiquitinate monoubiquitinated histone H2B. Required to maintain the transcriptionally repressive state of homeotic genes throughout development. The PR-DUB complex has weak or no activity toward 'Lys-48'- and 'Lys-63'-linked polyubiquitin chains. Polycomb group (PcG) protein. This chain is Ubiquitin carboxyl-terminal hydrolase calypso, found in Culex quinquefasciatus (Southern house mosquito).